A 75-amino-acid chain; its full sequence is uncharacterized protein (75 aa).

A disordered region spans residues 1–23 (MADAMDLAQLREQEDRERHISNA). Basic and acidic residues predominate over residues 9–20 (QLREQEDRERHI). The dksA C4-type zinc-finger motif lies at 35 to 59 (CEECDAPIPEARRRAIPGVQCCVTC).

This is an uncharacterized protein from Escherichia phage 186 (Bacteriophage 186).